A 2439-amino-acid chain; its full sequence is Mucin-6 (2439 aa).

Residues 1 to 22 (MVQRWLLLSCCGALLSAGLANT) form the signal peptide. In terms of domain architecture, VWFD 1 spans 43 to 214 (GQCSTWGAGH…KLDDPGEICT (172 aa)). Disulfide bonds link C45–C176 and C67–C213. N268 carries N-linked (GlcNAc...) asparagine glycosylation. The TIL domain maps to 302 to 357 (CPANQVYQECGSACVKTCSNPQHSCSSSCTFGCFCPEGTVLNDLSNNHTCVPVTQC). Positions 395 to 579 (GHCSLEGGSF…ALERETDPCS (185 aa)) constitute a VWFD 2 domain. Cystine bridges form between C397-C533 and C419-C578. N-linked (GlcNAc...) asparagine glycans are attached at residues N486 and N659. The VWFD 3 domain occupies 866 to 1038 (STCTLYGEGH…NSWKESPLCG (173 aa)). Disulfide bonds link C868-C1002, C890-C1037, C899-C999, and C917-C924. Residues N975 and N1179 are each glycosylated (N-linked (GlcNAc...) asparagine). 8 disordered regions span residues 1202–1455 (PQPP…TSLV), 1471–1626 (ATSA…LVTP), 1642–1834 (SASI…HPHT), 1868–1983 (SIHS…STGP), 2033–2077 (ATSA…THSS), 2090–2196 (SSSW…SASP), 2233–2278 (VSPT…SLTT), and 2323–2348 (LTAHGSTPASAPVSSLGTPTPTSPGV). Over residues 1224 to 1265 (TGTSTTIGLLSSTGPSPSSNHTPASPTQTPLLPATLTSSKPT) the composition is skewed to low complexity. Residues 1276–1286 (TAVTPQATSGL) are compositionally biased toward polar residues. Residues 1294 to 1339 (STATKPTVTQATTRATASTASPATTSTAQSTTRTTMTLPTPATSGT) are compositionally biased toward low complexity. Residues 1340–1351 (SPTLPKSTNQEL) are compositionally biased toward polar residues. Low complexity-rich tracts occupy residues 1352-1373 (PGTTATQTTGPRPTPASTTGPT) and 1381-1415 (TRPTATETTQTRTTTEYTTPQTPHTTHSPPTAGSP). 3 stretches are compositionally biased toward polar residues: residues 1416–1455 (VPSTGPVTATSFHATTTYPTPSHPETTLPTHVPPFSTSLV), 1471–1481 (ATSASNHSAPT), and 1490–1520 (LKATGSTHTAPPITPTTSGTSQAHSSFSTNK). Low complexity-rich tracts occupy residues 1521-1567 (TPTS…ATSS) and 1574-1611 (TTHSPPTGSSPFSSTGPMTATSFKTTTTYPTPSHPQTT). One copy of the 1; truncated repeat lies at 1561 to 1738 (TNSATSSRPP…TTSGTSQSRS (178 aa)). The tract at residues 1607–1953 (HPQTTLPTHV…STGTRTPVAH (347 aa)) is approximate repeats. Polar residues predominate over residues 1659–1686 (LKATGSTHTAPTMTLTTSGTSQALSSLN). The segment covering 1687 to 1768 (TAKTSTSLHS…PEVTSTSTTS (82 aa)) has biased composition (low complexity). Positions 1769–1793 (ITPNHTSTGTRTPVAHTTSATSSRL) are enriched in polar residues. The stretch at 1785 to 1953 (TTSATSSRLP…STGTRTPVAH (169 aa)) is repeat 2. 2 stretches are compositionally biased toward low complexity: residues 1794–1834 (PTPF…HPHT) and 1891–1917 (TAPPMTPTTSGTSQSPSSFSTAKTSTS). Polar residues predominate over residues 1918 to 1962 (LPYHTSSTHHPEVTPTSTTNITPKHTSTGTRTPVAHTTSASSSRL). Residues 1963 to 1983 (PTPFTTHSPPTGSSPFSSTGP) are compositionally biased toward low complexity. The segment covering 2052–2070 (LKATGSTHTAPPMTVTTSG) has biased composition (polar residues). Over residues 2090–2102 (SSSWLPQNSSSRP) the composition is skewed to low complexity. The span at 2107 to 2120 (ITTQLPHLSSATTP) shows a compositional bias: polar residues. A compositionally biased stretch (low complexity) spans 2121–2196 (VSTTNQLSSS…PTTASVSASP (76 aa)). Residues 2240–2264 (HLASSTIAFPSTPRTTASTHTAPAF) show a composition bias toward polar residues. The segment covering 2265-2278 (SSQSTTSRSTSLTT) has biased composition (low complexity). The segment covering 2323-2347 (LTAHGSTPASAPVSSLGTPTPTSPG) has biased composition (polar residues). Cystine bridges form between C2349–C2396, C2363–C2410, C2372–C2430, and C2376–C2432. The CTCK domain occupies 2349–2438 (CSVREQQEEI…HCVCSSVACG (90 aa)).

As to quaternary structure, multimer; disulfide-linked. In terms of processing, O-glycosylated. In terms of tissue distribution, expressed in the regenerative zone of gastric antrum, gastric body mucosa and gastric incisura mucosa. Expressed in the deeper mucous glands of gastric antrum. Overexpressed in Helicobacter pylori infected gastric epithelium. Highly expressed in duodenal Brunner's glands, gall bladder, seminal vesicle, pancreatic centroacinar cells and ducts, and periductal glands of the common bile duct.

The protein resides in the secreted. In terms of biological role, may provide a mechanism for modulation of the composition of the protective mucus layer related to acid secretion or the presence of bacteria and noxious agents in the lumen. Plays an important role in the cytoprotection of epithelial surfaces and are used as tumor markers in a variety of cancers. May play a role in epithelial organogenesis. The chain is Mucin-6 (MUC6) from Homo sapiens (Human).